A 490-amino-acid polypeptide reads, in one-letter code: Ketol-acid reductoisomerase (NADP(+)) (490 aa).

The KARI N-terminal Rossmann domain occupies 17-208 (LAQCEFMNAD…GGHRAGVLKS (192 aa)). NADP(+)-binding positions include 45-48 (CGAQ), R68, R76, S78, and 108-110 (DKQ). The active site involves H132. G158 lines the NADP(+) pocket. 2 consecutive KARI C-terminal knotted domains span residues 209–353 (SFIA…AEQE) and 355–486 (FDNG…MSAM). The Mg(2+) site is built by D217, E221, E389, and E393. S414 serves as a coordination point for substrate.

This sequence belongs to the ketol-acid reductoisomerase family. The cofactor is Mg(2+).

The enzyme catalyses (2R)-2,3-dihydroxy-3-methylbutanoate + NADP(+) = (2S)-2-acetolactate + NADPH + H(+). It carries out the reaction (2R,3R)-2,3-dihydroxy-3-methylpentanoate + NADP(+) = (S)-2-ethyl-2-hydroxy-3-oxobutanoate + NADPH + H(+). Its pathway is amino-acid biosynthesis; L-isoleucine biosynthesis; L-isoleucine from 2-oxobutanoate: step 2/4. It functions in the pathway amino-acid biosynthesis; L-valine biosynthesis; L-valine from pyruvate: step 2/4. Functionally, involved in the biosynthesis of branched-chain amino acids (BCAA). Catalyzes an alkyl-migration followed by a ketol-acid reduction of (S)-2-acetolactate (S2AL) to yield (R)-2,3-dihydroxy-isovalerate. In the isomerase reaction, S2AL is rearranged via a Mg-dependent methyl migration to produce 3-hydroxy-3-methyl-2-ketobutyrate (HMKB). In the reductase reaction, this 2-ketoacid undergoes a metal-dependent reduction by NADPH to yield (R)-2,3-dihydroxy-isovalerate. In Pseudoalteromonas translucida (strain TAC 125), this protein is Ketol-acid reductoisomerase (NADP(+)).